The primary structure comprises 122 residues: Large ribosomal subunit protein uL14 (122 aa).

It belongs to the universal ribosomal protein uL14 family. Part of the 50S ribosomal subunit. Forms a cluster with proteins L3 and L19. In the 70S ribosome, L14 and L19 interact and together make contacts with the 16S rRNA in bridges B5 and B8.

Functionally, binds to 23S rRNA. Forms part of two intersubunit bridges in the 70S ribosome. This chain is Large ribosomal subunit protein uL14, found in Aeromonas salmonicida (strain A449).